Reading from the N-terminus, the 89-residue chain is Small ribosomal subunit protein uS15 (89 aa).

The protein belongs to the universal ribosomal protein uS15 family. As to quaternary structure, part of the 30S ribosomal subunit. Forms a bridge to the 50S subunit in the 70S ribosome, contacting the 23S rRNA.

One of the primary rRNA binding proteins, it binds directly to 16S rRNA where it helps nucleate assembly of the platform of the 30S subunit by binding and bridging several RNA helices of the 16S rRNA. Functionally, forms an intersubunit bridge (bridge B4) with the 23S rRNA of the 50S subunit in the ribosome. The polypeptide is Small ribosomal subunit protein uS15 (Mycolicibacterium vanbaalenii (strain DSM 7251 / JCM 13017 / BCRC 16820 / KCTC 9966 / NRRL B-24157 / PYR-1) (Mycobacterium vanbaalenii)).